Here is a 590-residue protein sequence, read N- to C-terminus: Arginine--tRNA ligase (590 aa).

The short motif at Ala138–His148 is the 'HIGH' region element.

This sequence belongs to the class-I aminoacyl-tRNA synthetase family. Monomer.

It is found in the cytoplasm. It carries out the reaction tRNA(Arg) + L-arginine + ATP = L-arginyl-tRNA(Arg) + AMP + diphosphate. The protein is Arginine--tRNA ligase of Orientia tsutsugamushi (strain Ikeda) (Rickettsia tsutsugamushi).